Reading from the N-terminus, the 309-residue chain is L-aminoadipate-semialdehyde dehydrogenase-phosphopantetheinyl transferase (309 aa).

Residues arginine 47, 86-91, and 108-111 contribute to the CoA site; these read RTAKGK and NISH. Residues aspartate 129 and glutamate 181 each contribute to the Mg(2+) site. 181-185 is a binding site for CoA; that stretch reads ESFIK. Residue serine 258 is modified to Phosphoserine.

Belongs to the P-Pant transferase superfamily. AcpS family. Monomer. The cofactor is Mg(2+).

It is found in the cytoplasm. The protein resides in the cytosol. It carries out the reaction apo-[ACP] + CoA = holo-[ACP] + adenosine 3',5'-bisphosphate + H(+). It catalyses the reaction apo-[ACP] + acetyl-CoA = acetyl-[ACP] + adenosine 3',5'-bisphosphate + H(+). Functionally, catalyzes the post-translational modification of target proteins by phosphopantetheine. Can transfer the 4'-phosphopantetheine moiety from coenzyme A, regardless of whether the CoA is presented in the free thiol form or as an acetyl thioester, to a serine residue of a broad range of acceptors including the acyl carrier domain of FASN. This Pongo abelii (Sumatran orangutan) protein is L-aminoadipate-semialdehyde dehydrogenase-phosphopantetheinyl transferase (AASDHPPT).